The chain runs to 458 residues: N-acetylgalactosamine kinase (458 aa).

Positions 43, 49, 50, and 52 each coordinate alpha-D-galactose. Positions 143, 145, and 146 each coordinate ATP. Asp-190 provides a ligand contact to alpha-D-galactose. Catalysis depends on Asp-190, which acts as the Proton acceptor. Residues Asn-233 and Lys-234 each contribute to the ATP site.

The protein belongs to the GHMP kinase family. GalK subfamily. Monomer.

The catalysed reaction is N-acetyl-alpha-D-galactosamine + ATP = N-acetyl-alpha-D-galactosamine 1-phosphate + ADP + H(+). In terms of biological role, acts on GalNAc. Also acts as a galactokinase when galactose is present at high concentrations. The sequence is that of N-acetylgalactosamine kinase (Galk2) from Mus musculus (Mouse).